The following is a 44-amino-acid chain: SPbeta prophage-derived uncharacterized protein YosI (44 aa).

In Bacillus subtilis (strain 168), this protein is SPbeta prophage-derived uncharacterized protein YosI (yosI).